A 341-amino-acid polypeptide reads, in one-letter code: Phenylalanine--tRNA ligase alpha subunit (341 aa).

E254 is a binding site for Mg(2+).

Belongs to the class-II aminoacyl-tRNA synthetase family. Phe-tRNA synthetase alpha subunit type 1 subfamily. Tetramer of two alpha and two beta subunits. It depends on Mg(2+) as a cofactor.

Its subcellular location is the cytoplasm. The catalysed reaction is tRNA(Phe) + L-phenylalanine + ATP = L-phenylalanyl-tRNA(Phe) + AMP + diphosphate + H(+). In Mycoplasma pneumoniae (strain ATCC 29342 / M129 / Subtype 1) (Mycoplasmoides pneumoniae), this protein is Phenylalanine--tRNA ligase alpha subunit (pheS).